The chain runs to 248 residues: Histone H1, gonadal (248 aa).

2 disordered regions span residues 1 to 46 and 115 to 248; these read PGSP…PPVL and AVAK…KARK. A compositionally biased stretch (basic residues) spans 9–39; the sequence is ASPRKSPRKSPKKSPRKASASPRRKAKRARA. One can recognise an H15 domain in the interval 41 to 115; that stretch reads THPPVLEMVQ…GASGRFRVGA (75 aa). Residues 118–248 show a composition bias toward basic residues; that stretch reads KPKKAKKTSA…KRRSPKKARK (131 aa).

The protein belongs to the histone H1/H5 family. As to expression, sperm.

Its subcellular location is the nucleus. The protein localises to the chromosome. Functionally, histones H1 are necessary for the condensation of nucleosome chains into higher-order structures. This is Histone H1, gonadal from Parechinus angulosus (Angulate sea urchin).